The primary structure comprises 914 residues: UPF0182 protein PTH_1387 (914 aa).

A run of 7 helical transmembrane segments spans residues 7–27 (FAAYVLAGFGLIFLALTIAGA), 48–68 (IIISDLGLRLAVGLTFFVLLF), 109–129 (LLLLAFIALSALMAFLFNFTV), 173–193 (INWVILVSAFWVLAAYFVVYF), 209–229 (YHFSFLAAIFFGLKAAGYQLE), 252–272 (TLLAYKVLTYIALLCALAILI), and 281–301 (LVIYSIGVLLIASVLLGGIYP).

It belongs to the UPF0182 family.

The protein localises to the cell membrane. The sequence is that of UPF0182 protein PTH_1387 from Pelotomaculum thermopropionicum (strain DSM 13744 / JCM 10971 / SI).